The following is a 360-amino-acid chain: Histidinol-phosphate aminotransferase (360 aa).

K218 is modified (N6-(pyridoxal phosphate)lysine).

The protein belongs to the class-II pyridoxal-phosphate-dependent aminotransferase family. Histidinol-phosphate aminotransferase subfamily. In terms of assembly, homodimer. It depends on pyridoxal 5'-phosphate as a cofactor.

It catalyses the reaction L-histidinol phosphate + 2-oxoglutarate = 3-(imidazol-4-yl)-2-oxopropyl phosphate + L-glutamate. It functions in the pathway amino-acid biosynthesis; L-histidine biosynthesis; L-histidine from 5-phospho-alpha-D-ribose 1-diphosphate: step 7/9. The chain is Histidinol-phosphate aminotransferase from Chlorobium phaeobacteroides (strain DSM 266 / SMG 266 / 2430).